A 289-amino-acid polypeptide reads, in one-letter code: 2-hydroxy-6-oxononadienedioate/2-hydroxy-6-oxononatrienedioate hydrolase (289 aa).

The active-site Proton acceptor is the histidine 269.

This sequence belongs to the AB hydrolase superfamily. MhpC family. In terms of assembly, homodimer.

It carries out the reaction (2Z,4E)-2-hydroxy-6-oxonona-2,4-dienedioate + H2O = (2Z)-2-hydroxypenta-2,4-dienoate + succinate + H(+). The enzyme catalyses (2Z,4E,7E)-2-hydroxy-6-oxonona-2,4,7-trienedioate + H2O = (2Z)-2-hydroxypenta-2,4-dienoate + fumarate + H(+). It functions in the pathway aromatic compound metabolism; 3-phenylpropanoate degradation. Catalyzes the cleavage of the C5-C6 bond of 2-hydroxy-6-oxononadienedioate and 2-hydroxy-6-oxononatrienedioate, a dienol ring fission product of the bacterial meta-cleavage pathway for degradation of phenylpropionic acid. This is 2-hydroxy-6-oxononadienedioate/2-hydroxy-6-oxononatrienedioate hydrolase from Cupriavidus pinatubonensis (strain JMP 134 / LMG 1197) (Cupriavidus necator (strain JMP 134)).